A 179-amino-acid chain; its full sequence is Ribosome maturation factor RimM (179 aa).

Residues 102 to 175 form the PRC barrel domain; sequence VEMWWDRDLV…RIVVDPPPGL (74 aa).

This sequence belongs to the RimM family. As to quaternary structure, binds ribosomal protein uS19.

The protein localises to the cytoplasm. An accessory protein needed during the final step in the assembly of 30S ribosomal subunit, possibly for assembly of the head region. Essential for efficient processing of 16S rRNA. May be needed both before and after RbfA during the maturation of 16S rRNA. It has affinity for free ribosomal 30S subunits but not for 70S ribosomes. The protein is Ribosome maturation factor RimM of Frankia casuarinae (strain DSM 45818 / CECT 9043 / HFP020203 / CcI3).